The following is a 218-amino-acid chain: Probable nicotinate-nucleotide adenylyltransferase (218 aa).

Belongs to the NadD family.

It catalyses the reaction nicotinate beta-D-ribonucleotide + ATP + H(+) = deamido-NAD(+) + diphosphate. It functions in the pathway cofactor biosynthesis; NAD(+) biosynthesis; deamido-NAD(+) from nicotinate D-ribonucleotide: step 1/1. In terms of biological role, catalyzes the reversible adenylation of nicotinate mononucleotide (NaMN) to nicotinic acid adenine dinucleotide (NaAD). This chain is Probable nicotinate-nucleotide adenylyltransferase, found in Burkholderia cenocepacia (strain ATCC BAA-245 / DSM 16553 / LMG 16656 / NCTC 13227 / J2315 / CF5610) (Burkholderia cepacia (strain J2315)).